A 235-amino-acid polypeptide reads, in one-letter code: uncharacterized protein (235 aa).

A run of 7 helical transmembrane segments spans residues 2–22 (VIGP…GALL), 34–54 (MTSI…VKCA), 56–76 (LPAM…CLLE), 102–122 (FIQN…GIFG), 147–167 (MIFA…LLII), 178–198 (ILPL…GLLL), and 210–230 (MFPV…SAAW).

The protein resides in the cell membrane. This is an uncharacterized protein from Escherichia coli (strain K12).